The following is a 433-amino-acid chain: Glutamate-1-semialdehyde 2,1-aminomutase (433 aa).

Position 273 is an N6-(pyridoxal phosphate)lysine (Lys273).

This sequence belongs to the class-III pyridoxal-phosphate-dependent aminotransferase family. HemL subfamily. In terms of assembly, homodimer. Requires pyridoxal 5'-phosphate as cofactor.

It is found in the cytoplasm. The enzyme catalyses (S)-4-amino-5-oxopentanoate = 5-aminolevulinate. The protein operates within porphyrin-containing compound metabolism; protoporphyrin-IX biosynthesis; 5-aminolevulinate from L-glutamyl-tRNA(Glu): step 2/2. Its pathway is porphyrin-containing compound metabolism; chlorophyll biosynthesis. The chain is Glutamate-1-semialdehyde 2,1-aminomutase from Microcystis aeruginosa (strain NIES-843 / IAM M-2473).